Here is a 193-residue protein sequence, read N- to C-terminus: Xanthine phosphoribosyltransferase (193 aa).

Xanthine contacts are provided by leucine 20 and asparagine 27. 129–133 (ANGKA) is a 5-phospho-alpha-D-ribose 1-diphosphate binding site. Residue lysine 157 coordinates xanthine.

It belongs to the purine/pyrimidine phosphoribosyltransferase family. Xpt subfamily. Homodimer.

The protein resides in the cytoplasm. It catalyses the reaction XMP + diphosphate = xanthine + 5-phospho-alpha-D-ribose 1-diphosphate. It participates in purine metabolism; XMP biosynthesis via salvage pathway; XMP from xanthine: step 1/1. In terms of biological role, converts the preformed base xanthine, a product of nucleic acid breakdown, to xanthosine 5'-monophosphate (XMP), so it can be reused for RNA or DNA synthesis. The polypeptide is Xanthine phosphoribosyltransferase (Bifidobacterium longum (strain NCC 2705)).